Consider the following 363-residue polypeptide: Aspartate carbamoyltransferase, chloroplastic (363 aa).

The tract at residues 1–21 is disordered; it reads MAAARATLPLPRVPAPSPRPQ. The transit peptide at 1 to 36 directs the protein to the chloroplast; that stretch reads MAAARATLPLPRVPAPSPRPQLRPFPSLPARRGAVA. The segment covering 11 to 21 has biased composition (pro residues); that stretch reads PRVPAPSPRPQ. Carbamoyl phosphate is bound by residues R109 and T110. The UMP site is built by R109 and T110. K139 contributes to the L-aspartate binding site. Carbamoyl phosphate is bound by residues R160, H188, and Q191. The UMP site is built by R160 and H188. UMP-binding residues include R221 and R283. Residues R221 and R283 each coordinate L-aspartate. Residues L323 and P324 each coordinate carbamoyl phosphate.

The protein belongs to the aspartate/ornithine carbamoyltransferase superfamily. ATCase family. In terms of assembly, homotrimer.

It localises to the plastid. It is found in the chloroplast. It carries out the reaction carbamoyl phosphate + L-aspartate = N-carbamoyl-L-aspartate + phosphate + H(+). Its pathway is pyrimidine metabolism; UMP biosynthesis via de novo pathway; (S)-dihydroorotate from bicarbonate: step 2/3. Feedback inhibited by UMP. In terms of biological role, catalyzes the condensation of carbamoyl phosphate and aspartate to form carbamoyl aspartate and inorganic phosphate, the committed step in the de novo pyrimidine nucleotide biosynthesis pathway. This chain is Aspartate carbamoyltransferase, chloroplastic (PYRB), found in Oryza sativa subsp. japonica (Rice).